The chain runs to 149 residues: Large ribosomal subunit protein bL9 (149 aa).

Belongs to the bacterial ribosomal protein bL9 family.

In terms of biological role, binds to the 23S rRNA. The polypeptide is Large ribosomal subunit protein bL9 (Bacillus licheniformis (strain ATCC 14580 / DSM 13 / JCM 2505 / CCUG 7422 / NBRC 12200 / NCIMB 9375 / NCTC 10341 / NRRL NRS-1264 / Gibson 46)).